The sequence spans 1840 residues: Neurexin 1 (1840 aa).

The tract at residues 1–50 (MKAPHSATYQDNYADAAMTARTRPSMDMDQQRNRNQAELRLLPAQRTSTS) is disordered. Topologically, residues 1 to 1696 (MKAPHSATYQ…NSIEEERTAM (1696 aa)) are extracellular. The segment covering 24-37 (PSMDMDQQRNRNQA) has biased composition (basic and acidic residues). The Laminin G-like 1 domain maps to 104–289 (GFQLDGSQNS…RDIKCGDVPC (186 aa)). One can recognise an EGF-like 1 domain in the interval 309 to 347 (TTDACERNDPCQHGGICISTDSGPICECRNLEYDGQYCE). Cystine bridges form between cysteine 313/cysteine 325, cysteine 319/cysteine 334, cysteine 336/cysteine 346, cysteine 511/cysteine 547, cysteine 710/cysteine 739, cysteine 746/cysteine 757, cysteine 751/cysteine 766, and cysteine 768/cysteine 778. Laminin G-like domains follow at residues 352 to 547 (PSEA…EYQC) and 554 to 739 (DPVT…KPSC). In terms of domain architecture, EGF-like 2 spans 742 to 779 (QANVCNGNPCLNGGTCLEGWNRPICDCSATLYGGPTCG). Laminin G-like domains lie at 784 to 964 (TLAF…LPSA) and 982 to 1158 (HAAT…VSGC). Disulfide bonds link cysteine 1130/cysteine 1158, cysteine 1164/cysteine 1175, cysteine 1169/cysteine 1184, and cysteine 1186/cysteine 1196. The 38-residue stretch at 1160-1197 (GPTKCSQNACANRGNCVQQWNAYACECDMTSYTGPTCY) folds into the EGF-like 3 domain. Residues 1201–1416 (IAYEFGNNKG…LIFSGAGSGC (216 aa)) form the Laminin G-like 6 domain. The segment at 1411-1651 (GAGSGCRGDD…DEHHPLPPLP (241 aa)) is disordered. Positions 1447–1472 (QTTTSQQGNSLSTGGSSSGGVITNGT) are enriched in low complexity. Residues 1491–1527 (TTEQFTSTSTARGSESNNEMVTITTTGRSDVTTEQHQ) show a composition bias toward polar residues. Low complexity predominate over residues 1528-1600 (GSSSSSSSGS…TTTTTTTTQA (73 aa)). Basic and acidic residues predominate over residues 1632–1646 (RNDHDRMQLPDEHHP). A helical membrane pass occupies residues 1697 to 1717 (IIGIVAGILIAVVLVILLVLW). Over 1718–1840 (LKSNGDRGYK…DSKDVKEWYV (123 aa)) the chain is Cytoplasmic. Residues 1737-1840 (GSHNPNAALL…DSKDVKEWYV (104 aa)) form a disordered region. Residues 1747–1757 (GNTSTNGSYHQ) are compositionally biased toward polar residues. Over residues 1774–1787 (QQQHHAQQQMHNGH) the composition is skewed to low complexity. The span at 1788–1813 (NGNGNGGGGGGGGMMSSGSGSLGYGS) shows a compositional bias: gly residues. 2 residues coordinate Zn(2+): aspartate 1831 and aspartate 1834. Basic and acidic residues predominate over residues 1831-1840 (DSKDVKEWYV). The PDZ domain binding signature appears at 1837 to 1840 (EWYV).

This sequence belongs to the neurexin family. As to quaternary structure, interacts (via C-terminal PDZ binding motif) with CASK (via PDZ domain). Interacts (via cytoplasmic domain) with apolpp/ApoLI; the interaction supports apolpp/ApoLI protein stability. Interact (via cytoplasmic domain) with Spn/Spinophilin. Interacts with RhoGAP100F/Syd-1 (via PDZ domain); RhoGAP100F/Syd-1 may recruit Nrx-1 to the presynaptic active zone. Expressed in brain, with expression in medulla, lamina, lobula, lobula plate, mushroom body and antennal lobe, and in retina (at protein level). Expressed in rabdomere of photoreceptor cells (at protein level).

The protein localises to the synaptic cell membrane. The protein resides in the presynaptic cell membrane. It is found in the postsynaptic cell membrane. Neuronal cell adhesion protein involved in synapse formation, development of synaptic active zones, synaptic regulation and visual function. Plays a role in cell adhesion between the pre- and the postsynaptic cell. Required for proper proliferation of synaptic boutons during larval development, a process necessary for coordinated matching of pre-and postsynaptic compartments. Promotes presynaptic active zone formation and neurotransmitter release. Spn/Spinophilin fine-tunes nrx-1/nlg1 signaling at the pre-synapse to control active zone number and functionality and thereby optimizing action potential-induced exocytosis. Required for synapse formation in central nervous system. By regulating synapse formation, may play a role in larval associative learning. Together with RhoGAP100F/syd-1, controls synapse formation at the neuromuscular junction. Essential for synaptic vesicle cycling, which plays critical roles in neurotransmission at neuromuscular junctions (NMJ). Regulated and restricts formation of glutamate receptor clusters. Mediates retinoid transport and subsequent rhodopsin maturation and may regulate lipoprotein function; thereby playing a role in vision. Regulates sleep, circadian rhythm and synaptic plasticity. Together with CASK, required for locomotion. The protein is Neurexin 1 of Drosophila melanogaster (Fruit fly).